The chain runs to 622 residues: DNA-directed RNA polymerase subunit gamma (622 aa).

Residues C70, C72, C85, and C88 each contribute to the Zn(2+) site. The Mg(2+) site is built by D466, D468, and D470.

The protein belongs to the RNA polymerase beta' chain family. RpoC1 subfamily. In cyanobacteria the RNAP catalytic core is composed of 2 alpha, 1 beta, 1 beta', 1 gamma and 1 omega subunit. When a sigma factor is associated with the core the holoenzyme is formed, which can initiate transcription. It depends on Mg(2+) as a cofactor. The cofactor is Zn(2+).

It catalyses the reaction RNA(n) + a ribonucleoside 5'-triphosphate = RNA(n+1) + diphosphate. Functionally, DNA-dependent RNA polymerase catalyzes the transcription of DNA into RNA using the four ribonucleoside triphosphates as substrates. The protein is DNA-directed RNA polymerase subunit gamma of Cyanothece sp. (strain PCC 7425 / ATCC 29141).